The following is a 461-amino-acid chain: Histone acetyltransferase KAT5 (461 aa).

Positions 8–65 (IEGCRLPVLRRNQDNEDEWPLAEILSVKDISGRKLFYVHYIDFNKRLDEWVTHERLDL) constitute a Tudor-knot domain. Lys52 bears the N6-acetyllysine mark. The tract at residues 70–168 (FPKKEAKTPT…RMTGSLVSDR (99 aa)) is disordered. Ser86 and Ser90 each carry phosphoserine. Positions 90-100 (SPEREVKRKVE) are enriched in basic and acidic residues. An N6-acetyllysine; by autocatalysis mark is found at Lys96, Lys98, Lys135, and Lys137. Ser147 carries the post-translational modification Phosphoserine. Residues 175 to 452 (TRMKNIECIE…IDSKCLHFTP (278 aa)) form the MYST-type HAT domain. The C2HC MYST-type zinc finger occupies 208–233 (LYLCEFCLKYGRSLKCLQRHLTKCDL). The residue at position 275 (Lys275) is an N6-acetyllysine; by autocatalysis. The interaction with ATF2 stretch occupies residues 316–461 (ACILTLPPYQ…PKDWSKRGKW (146 aa)). Acetyl-CoA contacts are provided by residues 318–320 (ILT) and 325–331 (QRRGYGK). The active-site Proton donor/acceptor is Glu351. The acetyl-CoA site is built by Ser355 and Ser364. Residue Lys378 forms a Glycyl lysine isopeptide (Lys-Gly) (interchain with G-Cter in SUMO1); alternate linkage. Lys378 participates in a covalent cross-link: Glycyl lysine isopeptide (Lys-Gly) (interchain with G-Cter in SUMO2); alternate. Lys399 participates in a covalent cross-link: Glycyl lysine isopeptide (Lys-Gly) (interchain with G-Cter in SUMO1).

It belongs to the MYST (SAS/MOZ) family. As to quaternary structure, component of the NuA4 histone acetyltransferase complex which contains the catalytic subunit KAT5/TIP60 and the subunits EP400, TRRAP/PAF400, BRD8/SMAP, EPC1, DMAP1/DNMAP1, RUVBL1/TIP49, RUVBL2, ING3, actin, ACTL6A/BAF53A, MORF4L1/MRG15, MORF4L2/MRGX, MRGBP, YEATS4/GAS41, VPS72/YL1 and MEAF6. KAT5/TIP60, EPC1, and ING3 together constitute a minimal HAT complex termed Piccolo NuA4. The NuA4 complex interacts with MYC. Interacts with ATM. Interacts with JADE1. Interacts with PLA2G4A/CPLA2, EDNRA and HDAC7. Interacts with the cytoplasmic tail of APP and APBB1/FE65. Interacts with TRIM24 and TRIM68. Forms a complex with SENP6 and UBE2I in response to UV irradiation. Identified in a complex with HINT1. Interacts with ATF2 and CUL3. Interacts with NR1D2 (via N-terminus). Component of a SWR1-like complex. Interacts with FOXP3. Interacts with ZBTB49. Interacts with SRF. Interacts with ATF3; promoting autoacetylation and deubiquitination by USP7. Interacts with EP300/p300; interaction promotes KAT5 autoacetylation. Interacts with PRKDC; interaction is impaired following KAT5 sumoylation. Interacts with GPR50. In terms of processing, phosphorylated on Ser-86 and Ser-90; enhanced during G2/M phase. The phosphorylated form has a higher activity. Phosphorylation at Ser-90 by CDK1 or CDK9 is a prerequisite for phosphorylation at Ser-86 by GSK3. Phosphorylation at Ser-86 by GSK3 (GSK3A or GSK3B) activates acetyltransferase and acyltransferase activities. Phosphorylation at Ser-90 by CDK9 promotes KAT5 recruitment to chromatin. Phosphorylation by VRK1 following DNA damage promotes KAT5 association with chromatin and histone acetyltransferase activity. Post-translationally, autoacetylated. Autoacetylation is required for histone acetyltransferase activity. Autoacetylation at Lys-275 is facilitated by interaction with EP300/p300: it prevents ubiquitination and subsequent degradation by the proteasome and promotes acetylation of target proteins. Deacetylated by HDAC3 and SIRT1. Deacetylation by HDAC3 promotes its ubiquitination and cytoplasmic localization. Sumoylated by UBE2I at Lys-378 and Lys-399, leading to increase of its histone acetyltransferase activity in UV-induced DNA damage response, as well as its translocation to nuclear bodies. Sumoylation with SUMO2 by PIAS4 at Lys-378 promotes repair of DNA double-strand breaks (DSBs) via homologous recombination (HR). Sumoylation by PIAS4 impairs interaction with PRKDC, inhibiting non-homologous end joining (NHEJ)-mediated repair of DSBs, thereby facilitating HR. Desumoylated by SENP3. In terms of processing, ubiquitinated by MDM2, leading to its proteasome-dependent degradation. Ubiquitination is prevented by autoacetylation at Lys-275. Ubiquitinated following deacetylation by HDAC3, leading to cytoplasmic localization. Deubiquitinated by USP7 following interaction with ATF3, promoting its stabilization.

It localises to the nucleus. The protein resides in the chromosome. It is found in the cytoplasm. The protein localises to the centromere. Its subcellular location is the kinetochore. It localises to the cytoskeleton. The protein resides in the spindle pole. It is found in the nucleolus. The protein localises to the perinuclear region. It carries out the reaction L-lysyl-[histone] + acetyl-CoA = N(6)-acetyl-L-lysyl-[histone] + CoA + H(+). The catalysed reaction is L-lysyl-[protein] + acetyl-CoA = N(6)-acetyl-L-lysyl-[protein] + CoA + H(+). The enzyme catalyses (2E)-butenoyl-CoA + L-lysyl-[protein] = N(6)-(2E)-butenoyl-L-lysyl-[protein] + CoA + H(+). It catalyses the reaction 2-hydroxyisobutanoyl-CoA + L-lysyl-[protein] = N(6)-(2-hydroxyisobutanoyl)-L-lysyl-[protein] + CoA + H(+). It carries out the reaction (S)-lactoyl-CoA + L-lysyl-[protein] = N(6)-[(S)-lactoyl]-L-lysyl-[protein] + CoA + H(+). Acyltransferase and acetyltransferase activities are activated by phosphorylation and autoacetylation. Autoacetylation activates the histone acetyltransferase activity. Its function is as follows. Catalytic subunit of the NuA4 histone acetyltransferase complex, a multiprotein complex involved in transcriptional activation of select genes principally by acetylation of nucleosomal histones H2A and H4. Histone acetylation alters nucleosome-DNA interactions and promotes interaction of the modified histones with other proteins which positively regulate transcription. The NuA4 histone acetyltransferase complex is required for the activation of transcriptional programs associated with proto-oncogene mediated growth induction, tumor suppressor mediated growth arrest and replicative senescence, apoptosis, and DNA repair. The NuA4 complex plays a direct role in repair of DNA double-strand breaks (DSBs) by promoting homologous recombination (HR): the complex inhibits TP53BP1 binding to chromatin via MBTD1, which recognizes and binds histone H4 trimethylated at 'Lys-20' (H4K20me), and KAT5 that catalyzes acetylation of 'Lys-15' of histone H2A (H2AK15ac), thereby blocking the ubiquitination mark required for TP53BP1 localization at DNA breaks. Also involved in DSB repair by mediating acetylation of 'Lys-5' of histone H2AX (H2AXK5ac), promoting NBN/NBS1 assembly at the sites of DNA damage. The NuA4 complex plays a key role in hematopoietic stem cell maintenance and is required to maintain acetylated H2A.Z/H2AZ1 at MYC target genes. The NuA4 complex is also required for spermatid development by promoting acetylation of histones: histone hyperacetylation is required for histone replacement during the transition from round to elongating spermatids. Component of a SWR1-like complex that specifically mediates the removal of histone H2A.Z/H2AZ1 from the nucleosome. Also acetylates non-histone proteins, such as BMAL1, ATM, AURKB, CHKA, CGAS, ERCC4/XPF, LPIN1, TP53/p53, NDC80/HEC1, NR1D2, RAN, SOX4, FOXP3, SQSTM1, ULK1 and RUBCNL/Pacer. Directly acetylates and activates ATM. Promotes nucleotide excision repair (NER) by mediating acetylation of ERCC4/XPF, thereby promoting formation of the ERCC4-ERCC1 complex. Relieves NR1D2-mediated inhibition of APOC3 expression by acetylating NR1D2. Acts as a regulator of regulatory T-cells (Treg) by catalyzing FOXP3 acetylation, thereby promoting FOXP3 transcriptional repressor activity. Involved in skeletal myoblast differentiation by mediating acetylation of SOX4. Catalyzes acetylation of APBB1/FE65, increasing its transcription activator activity. Promotes transcription elongation during the activation phase of the circadian cycle by catalyzing acetylation of BMAL1, promoting elongation of circadian transcripts. Together with GSK3 (GSK3A or GSK3B), acts as a regulator of autophagy: phosphorylated at Ser-86 by GSK3 under starvation conditions, leading to activate acetyltransferase activity and promote acetylation of key autophagy regulators, such as ULK1 and RUBCNL/Pacer. Acts as a regulator of the cGAS-STING innate antiviral response by catalyzing acetylation the N-terminus of CGAS, thereby promoting CGAS DNA-binding and activation. Also regulates lipid metabolism by mediating acetylation of CHKA or LPIN1. Promotes lipolysis of lipid droplets following glucose deprivation by mediating acetylation of isoform 1 of CHKA, thereby promoting monomerization of CHKA and its conversion into a tyrosine-protein kinase. Acts as a regulator of fatty-acid-induced triacylglycerol synthesis by catalyzing acetylation of LPIN1, thereby promoting the synthesis of diacylglycerol. In addition to protein acetyltransferase, can use different acyl-CoA substrates, such as (2E)-butenoyl-CoA (crotonyl-CoA), S-lactoyl-CoA (lactyl-CoA) and 2-hydroxyisobutanoyl-CoA (2-hydroxyisobutyryl-CoA), and is able to mediate protein crotonylation, lactylation and 2-hydroxyisobutyrylation, respectively. Acts as a key regulator of chromosome segregation and kinetochore-microtubule attachment during mitosis by mediating acetylation or crotonylation of target proteins. Catalyzes acetylation of AURKB at kinetochores, increasing AURKB activity and promoting accurate chromosome segregation in mitosis. Acetylates RAN during mitosis, promoting microtubule assembly at mitotic chromosomes. Acetylates NDC80/HEC1 during mitosis, promoting robust kinetochore-microtubule attachment. Catalyzes crotonylation of MAPRE1/EB1, thereby ensuring accurate spindle positioning in mitosis. Catalyzes lactylation of NBN/NBS1 in response to DNA damage, thereby promoting DNA double-strand breaks (DSBs) via homologous recombination (HR). This chain is Histone acetyltransferase KAT5, found in Pongo abelii (Sumatran orangutan).